A 296-amino-acid chain; its full sequence is Phosphoribosylaminoimidazole-succinocarboxamide synthase (296 aa).

This sequence belongs to the SAICAR synthetase family.

It carries out the reaction 5-amino-1-(5-phospho-D-ribosyl)imidazole-4-carboxylate + L-aspartate + ATP = (2S)-2-[5-amino-1-(5-phospho-beta-D-ribosyl)imidazole-4-carboxamido]succinate + ADP + phosphate + 2 H(+). It participates in purine metabolism; IMP biosynthesis via de novo pathway; 5-amino-1-(5-phospho-D-ribosyl)imidazole-4-carboxamide from 5-amino-1-(5-phospho-D-ribosyl)imidazole-4-carboxylate: step 1/2. The polypeptide is Phosphoribosylaminoimidazole-succinocarboxamide synthase (Geotalea uraniireducens (strain Rf4) (Geobacter uraniireducens)).